A 365-amino-acid chain; its full sequence is Putative DNA-directed RNA polymerase subunit alpha-like 3 (365 aa).

Belongs to the RNA polymerase alpha chain family. In plastids the minimal PEP RNA polymerase catalytic core is composed of four subunits: alpha, beta, beta', and beta''. When a (nuclear-encoded) sigma factor is associated with the core the holoenzyme is formed, which can initiate transcription.

It localises to the plastid. Its subcellular location is the chloroplast. It carries out the reaction RNA(n) + a ribonucleoside 5'-triphosphate = RNA(n+1) + diphosphate. Functionally, DNA-dependent RNA polymerase catalyzes the transcription of DNA into RNA using the four ribonucleoside triphosphates as substrates. This Pelargonium hortorum (Common geranium) protein is Putative DNA-directed RNA polymerase subunit alpha-like 3 (rpoAL3-A).